Consider the following 3957-residue polypeptide: Ankyrin-2 (3957 aa).

The span at 1–14 (MMNEDAAQKSDSGE) shows a compositional bias: basic and acidic residues. A disordered region spans residues 1–34 (MMNEDAAQKSDSGEKFNGSSQRRKRPKKSDSNAS). ANK repeat units follow at residues 30-62 (DSNA…TCNQ), 63-92 (NGLN…SVDS), 96-125 (KGNT…NINA), 129-158 (NGFT…NQST), 162-191 (DGFT…KGKV), 193-220 (LPAL…NADV), 232-261 (SGFT…AVDF), 265-294 (NGIT…QIDA), 298-327 (DGLT…PLLA), 331-360 (NGLS…PVDD), 364-393 (DYLT…NPNA), 397-426 (NGFT…SIQA), 430-459 (SGLT…SPDV), 463-492 (RGET…LVDA), 496-525 (EEQT…HPDA), 529-558 (NGYT…AHSL), 562-591 (KGFT…AADS), 595-624 (NGLT…SPHA), 628-657 (NGYT…ETNI), 661-690 (QGVT…NIHM), 694-723 (SGLT…DQDA), 727-756 (LGYT…NVNA), 760-789 (NGYT…KPNA), and 793-822 (NGNT…EVTT). Residues Ser-31 and Ser-34 each carry the phosphoserine modification. Residue Tyr-378 is modified to Phosphotyrosine. Tyr-531 bears the Phosphotyrosine mark. Ser-846 carries the post-translational modification Phosphoserine. Thr-853 carries the post-translational modification Phosphothreonine. The residue at position 874 (Ser-874) is a Phosphoserine. Residues 966–1125 (SGFLVSFMVD…ELNEILNGMD (160 aa)) form an interaction with SPTBN1 region. ZU5 domains are found at residues 968-1156 (FLVS…VVSR) and 1158-1304 (KQDS…LIDC). Residues 1289–1423 (VSFTTNVSAR…FVKVRDTTQE (135 aa)) are UPA domain. Tyr-1382 is subject to Phosphotyrosine. The region spanning 1450–1535 (ITLPIYTKES…SDKAGSIKVK (86 aa)) is the Death 1 domain. Residues 1457 to 1486 (KESESDQEQEEEIDMTSEKNDETESTETSV) form a disordered region. 5 positions are modified to phosphoserine: Ser-1459, Ser-1461, Ser-1473, Ser-1500, and Ser-1596. Residues 1461–1471 (SDQEQEEEIDM) show a composition bias toward acidic residues. Disordered regions lie at residues 1670–2137 (AVGR…TDFS), 2197–2411 (ALDG…GLEL), 2430–2484 (AVSH…GIFP), 2507–2586 (SRLL…TPEE), 2604–2852 (EAKQ…SLPH), 2864–2904 (DISA…TDRF), and 2923–2951 (QITS…ANHT). Basic and acidic residues-rich tracts occupy residues 1674 to 1683 (SSEKEGKDIP) and 1711 to 1733 (KQKQ…KGSS). Phosphoserine occurs at positions 1732, 1733, and 1736. The span at 1766-1783 (IKDKVKALQKRVEDEQKG) shows a compositional bias: basic and acidic residues. Repeat A repeat units lie at residues 1806–1817 (HPAASPSLKSER), 1818–1829 (HAPGSPSPKTER), 1830–1841 (HSTLSSSAKTER), 1842–1853 (HPPVSPSSKTEK), 1854–1865 (HSPVSPSAKTER), 1866–1877 (HSPASSSSKTEK), and 1878–1889 (HSPVSPSTKTER). The interval 1806-1983 (HPAASPSLKS…PVSPTSKTER (178 aa)) is repeat-rich region. Ser-1855 and Ser-1858 each carry phosphoserine. Composition is skewed to basic and acidic residues over residues 1886–1902 (KTER…ERHP) and 1921–1937 (RTEK…EKRL). One copy of the Repeat A; approximate repeat lies at 1890 to 1900 (HSPVSSTKTER). Repeat A repeat units lie at residues 1901 to 1912 (HPPVSPSGKTDK) and 1913 to 1924 (RPPVSPSGRTEK). One copy of the Repeat A; approximate repeat lies at 1925-1935 (HPPVSPGRTEK). Position 1929 is a phosphoserine (Ser-1929). 4 Repeat A repeats span residues 1936–1947 (RLPVSPSGRTDK), 1948–1959 (HQPVSTAGKTEK), 1960–1971 (HLPVSPSGKTEK), and 1972–1983 (QPPVSPTSKTER). Basic and acidic residues-rich tracts occupy residues 1980–1994 (KTER…RELM), 2003–2034 (PSKH…KEKG), 2075–2093 (VKKE…HKIP), and 2102–2117 (EESH…KMAD). Ser-2127 carries the post-translational modification Phosphoserine. Basic and acidic residues predominate over residues 2128 to 2137 (PDRKTSTDFS). Position 2239 is a phosphothreonine (Thr-2239). Residues 2240-2251 (PETSPESLSFSP) are compositionally biased toward polar residues. Ser-2243 is modified (phosphoserine). Residues 2252-2282 (KKSEEQTGETKESTKTETTTEIRSEKEHPTT) are compositionally biased toward basic and acidic residues. A Phosphothreonine modification is found at Thr-2269. Residue Ser-2275 is modified to Phosphoserine. Residues 2355–2376 (TFGSSAHKTQTDSEVQESTATS) are compositionally biased toward polar residues. Phosphoserine is present on residues Ser-2405, Ser-2440, Ser-2454, Ser-2516, and Ser-2521. A compositionally biased stretch (polar residues) spans 2523–2545 (EQTSLMESSGKSPLSPDTPSSEE). Composition is skewed to basic and acidic residues over residues 2576 to 2586 (NGEKKRFTPEE) and 2604 to 2619 (EAKQ…KQEE). A Phosphothreonine modification is found at Thr-2583. Phosphoserine is present on residues Ser-2679 and Ser-2701. The span at 2696–2705 (PSSMDSNSSP) shows a compositional bias: low complexity. Positions 2729–2776 (EPGKSEEEKDSESHLAEDRHAVSTEAEDRSYDKLNRDTDQPKICDGHG) are enriched in basic and acidic residues. Phosphoserine is present on residues Ser-2781 and Ser-2795. The span at 2781–2791 (SPSSSAAPVSS) shows a compositional bias: low complexity. The span at 2892-2903 (SQDSSITTQTDR) shows a compositional bias: polar residues. The residue at position 2956 (Ser-2956) is a Phosphoserine. 3 disordered regions span residues 2987-3016 (NFEG…SSFE), 3069-3099 (LMVD…SEQN), and 3136-3462 (QESR…PTKE). Polar residues predominate over residues 2998-3016 (QQESTLWEMQSDSVSSSFE). Ser-3075 bears the Phosphoserine mark. Thr-3078 carries the phosphothreonine modification. Low complexity predominate over residues 3078-3087 (TTPDTTPART). Positions 3090-3099 (EEGTPTSEQN) are enriched in polar residues. The span at 3137–3149 (ESREETLSEDVKE) shows a compositional bias: basic and acidic residues. Over residues 3157 to 3169 (LPLETSAESLALS) the composition is skewed to low complexity. The segment covering 3175–3194 (VDDEADLLPDDVSEEVEEIP) has biased composition (acidic residues). Composition is skewed to polar residues over residues 3198–3212 (AQLN…STET) and 3256–3265 (LDFSTLTRSV). 3 positions are modified to phosphoserine: Ser-3273, Ser-3276, and Ser-3277. The span at 3335-3344 (EENKADEAKP) shows a compositional bias: basic and acidic residues. A compositionally biased stretch (polar residues) spans 3357–3374 (VEQQLSDLDTSVQKTVAP). Ser-3390 and Ser-3409 each carry phosphoserine. Basic and acidic residues predominate over residues 3409–3423 (SYTETETESRERAEE). The segment covering 3446-3460 (SRSTTSSCRGGTSPT) has biased composition (low complexity). At Ser-3474 the chain carries Phosphoserine. A Death 2 domain is found at 3569–3653 (IEERLAYIAD…DIVHLMETNT (85 aa)). Position 3735 is a phosphoserine (Ser-3735). A phosphothreonine mark is found at Thr-3776, Thr-3797, Thr-3803, and Thr-3814. The disordered stretch occupies residues 3777–3858 (PGTETSETQK…VESADNQPET (82 aa)). At Ser-3823 the chain carries Phosphoserine. Basic and acidic residues predominate over residues 3832-3841 (PSEHREESSP). Ser-3909 bears the Phosphoserine mark.

As to quaternary structure, interacts with RHBG and SPTBN1. Colocalizes with Na/K ATPase, Na/Ca exchanger and SPTBN1. Directly interacts with DMD; this interaction is necessary for DMD localization at the sarcolemma. Interacts with DCTN4; this interaction is required for DCTN4 retention at costameres. Identified in complexes that contain VIM, EZR, AHNAK, BFSP1, BFSP2, ANK2, PLEC, PRX and spectrin. Interacts (via death domain) with RABGAP1L (via Rab-GAP TBC domain). Phosphorylated at multiple sites by different protein kinases and each phosphorylation event regulates the protein's structure and function. Present in plasma membrane of neurons as well as glial cells throughout the brain. Expressed in fetal brain and in temporal cortex of adult brain. Also expressed in the inner segments of rod photoreceptors in retina.

Its subcellular location is the cytoplasm. The protein resides in the cytoskeleton. The protein localises to the membrane. It is found in the myofibril. It localises to the sarcomere. Its subcellular location is the m line. The protein resides in the apical cell membrane. The protein localises to the cell membrane. It is found in the postsynaptic cell membrane. It localises to the early endosome. Its subcellular location is the recycling endosome. The protein resides in the lysosome. The protein localises to the mitochondrion. It is found in the z line. It localises to the sarcolemma. Its subcellular location is the T-tubule. Its function is as follows. Plays an essential role in the localization and membrane stabilization of ion transporters and ion channels in several cell types, including cardiomyocytes, as well as in striated muscle cells. In skeletal muscle, required for proper localization of DMD and DCTN4 and for the formation and/or stability of a special subset of microtubules associated with costameres and neuromuscular junctions. In cardiomyocytes, required for coordinate assembly of Na/Ca exchanger, SLC8A1/NCX1, Na/K ATPases ATP1A1 and ATP1A2 and inositol 1,4,5-trisphosphate (InsP3) receptors at sarcoplasmic reticulum/sarcolemma sites. Required for expression and targeting of SPTBN1 in neonatal cardiomyocytes and for the regulation of neonatal cardiomyocyte contraction rate. In the inner segment of rod photoreceptors, required for the coordinated expression of the Na/K ATPase, Na/Ca exchanger and beta-2-spectrin (SPTBN1). Plays a role in endocytosis and intracellular protein transport. Associates with phosphatidylinositol 3-phosphate (PI3P)-positive organelles and binds dynactin to promote long-range motility of cells. Recruits RABGAP1L to (PI3P)-positive early endosomes, where RABGAP1L inactivates RAB22A, and promotes polarized trafficking to the leading edge of the migrating cells. Part of the ANK2/RABGAP1L complex which is required for the polarized recycling of fibronectin receptor ITGA5 ITGB1 to the plasma membrane that enables continuous directional cell migration. This Homo sapiens (Human) protein is Ankyrin-2 (ANK2).